A 115-amino-acid polypeptide reads, in one-letter code: Probable 4-amino-4-deoxy-L-arabinose-phosphoundecaprenol flippase subunit ArnE (115 aa).

4 helical membrane-spanning segments follow: residues 1–21 (MIVGYLLVVLVSLLTCGGQLC), 43–63 (WLALAVLLLGLGMAVWLNVLQ), 65–85 (LPLSLAYPTLSLNFVLVTLAA), and 93–113 (TTARHWYGVASIMLGILLMSI). Positions 44 to 113 (LALAVLLLGL…IMLGILLMSI (70 aa)) constitute an EamA domain.

The protein belongs to the ArnE family. In terms of assembly, heterodimer of ArnE and ArnF.

The protein localises to the cell inner membrane. It functions in the pathway bacterial outer membrane biogenesis; lipopolysaccharide biosynthesis. In terms of biological role, translocates 4-amino-4-deoxy-L-arabinose-phosphoundecaprenol (alpha-L-Ara4N-phosphoundecaprenol) from the cytoplasmic to the periplasmic side of the inner membrane. This is Probable 4-amino-4-deoxy-L-arabinose-phosphoundecaprenol flippase subunit ArnE from Serratia proteamaculans (strain 568).